The sequence spans 170 residues: Probable host range protein 2 (170 aa).

Positions 145–170 (SDSDSDVDDRAELHKRNNDSDSDDYT) are disordered. Residues 152–163 (DDRAELHKRNND) show a composition bias toward basic and acidic residues.

This sequence belongs to the poxviridae C7 protein family.

In terms of biological role, plays a role for multiplication of the virus in different cell types. This Bos taurus (Bovine) protein is Probable host range protein 2.